A 426-amino-acid polypeptide reads, in one-letter code: Serine--tRNA ligase (426 aa).

An L-serine-binding site is contributed by 229–231; that stretch reads TAE. Residues 260 to 262 and V276 contribute to the ATP site; that span reads RKE. E283 lines the L-serine pocket. 349–352 is an ATP binding site; the sequence is EVTS. T384 is a binding site for L-serine.

Belongs to the class-II aminoacyl-tRNA synthetase family. Type-1 seryl-tRNA synthetase subfamily. Homodimer. The tRNA molecule binds across the dimer.

It is found in the cytoplasm. The enzyme catalyses tRNA(Ser) + L-serine + ATP = L-seryl-tRNA(Ser) + AMP + diphosphate + H(+). It carries out the reaction tRNA(Sec) + L-serine + ATP = L-seryl-tRNA(Sec) + AMP + diphosphate + H(+). It functions in the pathway aminoacyl-tRNA biosynthesis; selenocysteinyl-tRNA(Sec) biosynthesis; L-seryl-tRNA(Sec) from L-serine and tRNA(Sec): step 1/1. Its function is as follows. Catalyzes the attachment of serine to tRNA(Ser). Is also able to aminoacylate tRNA(Sec) with serine, to form the misacylated tRNA L-seryl-tRNA(Sec), which will be further converted into selenocysteinyl-tRNA(Sec). The chain is Serine--tRNA ligase from Treponema pallidum (strain Nichols).